Here is a 1052-residue protein sequence, read N- to C-terminus: Carbamoyl phosphate synthase large chain (1052 aa).

The interval 1 to 399 (MRENVKRVLV…ALQKAVRMLD (399 aa)) is carboxyphosphate synthetic domain. ATP is bound by residues Arg-127, Arg-167, Gly-173, Gly-174, Lys-206, Leu-208, Glu-213, Gly-239, Val-240, His-241, Gln-282, and Glu-296. The region spanning 131-325 (RETMINVNLP…LAYVSAKLAL (195 aa)) is the ATP-grasp 1 domain. Mg(2+) contacts are provided by Gln-282, Glu-296, and Asn-298. Gln-282, Glu-296, and Asn-298 together coordinate Mn(2+). The oligomerization domain stretch occupies residues 400–548 (LGEPGIIGGK…VTYNGTEDDI (149 aa)). Positions 549–930 (EFSNGIRKLL…LKSWLSSSPN (382 aa)) are carbamoyl phosphate synthetic domain. In terms of domain architecture, ATP-grasp 2 spans 674-864 (SRLLDKLGIK…IIDLALTGVI (191 aa)). Residues Arg-710, Lys-749, Ile-751, Glu-756, Gly-780, Val-781, His-782, Ser-783, Gln-823, and Glu-835 each contribute to the ATP site. The Mg(2+) site is built by Gln-823, Glu-835, and Asn-837. Residues Gln-823, Glu-835, and Asn-837 each coordinate Mn(2+). The region spanning 930–1052 (NRLPDQKGIA…YEIGEYGAGI (123 aa)) is the MGS-like domain. The interval 931–1052 (RLPDQKGIAL…YEIGEYGAGI (122 aa)) is allosteric domain.

It belongs to the CarB family. Composed of two chains; the small (or glutamine) chain promotes the hydrolysis of glutamine to ammonia, which is used by the large (or ammonia) chain to synthesize carbamoyl phosphate. Tetramer of heterodimers (alpha,beta)4. Mg(2+) is required as a cofactor. Mn(2+) serves as cofactor.

It catalyses the reaction hydrogencarbonate + L-glutamine + 2 ATP + H2O = carbamoyl phosphate + L-glutamate + 2 ADP + phosphate + 2 H(+). It carries out the reaction hydrogencarbonate + NH4(+) + 2 ATP = carbamoyl phosphate + 2 ADP + phosphate + 2 H(+). It participates in amino-acid biosynthesis; L-arginine biosynthesis; carbamoyl phosphate from bicarbonate: step 1/1. The protein operates within pyrimidine metabolism; UMP biosynthesis via de novo pathway; (S)-dihydroorotate from bicarbonate: step 1/3. Large subunit of the glutamine-dependent carbamoyl phosphate synthetase (CPSase). CPSase catalyzes the formation of carbamoyl phosphate from the ammonia moiety of glutamine, carbonate, and phosphate donated by ATP, constituting the first step of 2 biosynthetic pathways, one leading to arginine and/or urea and the other to pyrimidine nucleotides. The large subunit (synthetase) binds the substrates ammonia (free or transferred from glutamine from the small subunit), hydrogencarbonate and ATP and carries out an ATP-coupled ligase reaction, activating hydrogencarbonate by forming carboxy phosphate which reacts with ammonia to form carbamoyl phosphate. The polypeptide is Carbamoyl phosphate synthase large chain (Sulfolobus acidocaldarius (strain ATCC 33909 / DSM 639 / JCM 8929 / NBRC 15157 / NCIMB 11770)).